Reading from the N-terminus, the 314-residue chain is 4-hydroxy-3-methylbut-2-enyl diphosphate reductase (314 aa).

Cys12 contacts [4Fe-4S] cluster. (2E)-4-hydroxy-3-methylbut-2-enyl diphosphate is bound by residues His41 and His74. 2 residues coordinate dimethylallyl diphosphate: His41 and His74. Residues His41 and His74 each contribute to the isopentenyl diphosphate site. Cys96 is a binding site for [4Fe-4S] cluster. Residue His124 participates in (2E)-4-hydroxy-3-methylbut-2-enyl diphosphate binding. Residue His124 coordinates dimethylallyl diphosphate. Isopentenyl diphosphate is bound at residue His124. The active-site Proton donor is Glu126. Thr168 is a (2E)-4-hydroxy-3-methylbut-2-enyl diphosphate binding site. Cys198 provides a ligand contact to [4Fe-4S] cluster. Residues Ser226, Ser227, Asn228, and Ser270 each coordinate (2E)-4-hydroxy-3-methylbut-2-enyl diphosphate. Ser226, Ser227, Asn228, and Ser270 together coordinate dimethylallyl diphosphate. Positions 226, 227, 228, and 270 each coordinate isopentenyl diphosphate.

The protein belongs to the IspH family. [4Fe-4S] cluster serves as cofactor.

It catalyses the reaction isopentenyl diphosphate + 2 oxidized [2Fe-2S]-[ferredoxin] + H2O = (2E)-4-hydroxy-3-methylbut-2-enyl diphosphate + 2 reduced [2Fe-2S]-[ferredoxin] + 2 H(+). The enzyme catalyses dimethylallyl diphosphate + 2 oxidized [2Fe-2S]-[ferredoxin] + H2O = (2E)-4-hydroxy-3-methylbut-2-enyl diphosphate + 2 reduced [2Fe-2S]-[ferredoxin] + 2 H(+). It participates in isoprenoid biosynthesis; dimethylallyl diphosphate biosynthesis; dimethylallyl diphosphate from (2E)-4-hydroxy-3-methylbutenyl diphosphate: step 1/1. The protein operates within isoprenoid biosynthesis; isopentenyl diphosphate biosynthesis via DXP pathway; isopentenyl diphosphate from 1-deoxy-D-xylulose 5-phosphate: step 6/6. Functionally, catalyzes the conversion of 1-hydroxy-2-methyl-2-(E)-butenyl 4-diphosphate (HMBPP) into a mixture of isopentenyl diphosphate (IPP) and dimethylallyl diphosphate (DMAPP). Acts in the terminal step of the DOXP/MEP pathway for isoprenoid precursor biosynthesis. The protein is 4-hydroxy-3-methylbut-2-enyl diphosphate reductase of Ectopseudomonas mendocina (strain ymp) (Pseudomonas mendocina).